Reading from the N-terminus, the 89-residue chain is Arminin 7591 (89 aa).

An N-terminal signal peptide occupies residues 1-18 (MRSAFAVLFLALIAITYS). Residues 19–58 (KNYEDVKEEIKNEVENEILKDLEEDVNEFDDNVQEEVNDA) constitute a propeptide that is removed on maturation. Leucine 86 carries the post-translational modification Leucine amide.

This sequence belongs to the arminin family. In terms of tissue distribution, expressed in entodermal epithelium along the body column.

It localises to the secreted. The protein resides in the target cell membrane. Its function is as follows. Antimicrobial peptide with a broad-spectrum antimicrobial activity. Keeps its antibacterial activity under a wide range of salt concentrations that mimic physiological conditions of human blood, which is surprising, since Hydra is an obligate freshwater animal with nearly no salt tolerance. Does not affect red blood cells. This chain is Arminin 7591, found in Hydra vulgaris (Hydra).